Here is a 72-residue protein sequence, read N- to C-terminus: uncharacterized protein (72 aa).

Belongs to the ycf76 family.

It localises to the plastid. The protein resides in the chloroplast. This is an uncharacterized protein from Oryza nivara (Indian wild rice).